Consider the following 142-residue polypeptide: Lysozyme X (142 aa).

The N-terminal stretch at 1–19 (MRALLGICVLALVTPAVLG) is a signal peptide. The 123-residue stretch at 20 to 142 (RTMDRCSLAR…YLPPIDDCFV (123 aa)) folds into the C-type lysozyme domain. Intrachain disulfides connect Cys-25–Cys-140, Cys-46–Cys-130, Cys-81–Cys-97, and Cys-93–Cys-111. Catalysis depends on residues Glu-51 and Asp-69.

The protein belongs to the glycosyl hydrolase 22 family. Found in the midgut.

It carries out the reaction Hydrolysis of (1-&gt;4)-beta-linkages between N-acetylmuramic acid and N-acetyl-D-glucosamine residues in a peptidoglycan and between N-acetyl-D-glucosamine residues in chitodextrins.. Functionally, unlikely to play an active role in the humoral immune defense. May have a function in the digestion of bacteria in the food. May be involved in the clearance of bacteria from the larval gut before metamorphosis. The sequence is that of Lysozyme X (LysX) from Drosophila melanogaster (Fruit fly).